Consider the following 303-residue polypeptide: Porphobilinogen deaminase (303 aa).

An S-(dipyrrolylmethanemethyl)cysteine modification is found at Cys241.

The protein belongs to the HMBS family. As to quaternary structure, monomer. Dipyrromethane is required as a cofactor.

The enzyme catalyses 4 porphobilinogen + H2O = hydroxymethylbilane + 4 NH4(+). The protein operates within porphyrin-containing compound metabolism; protoporphyrin-IX biosynthesis; coproporphyrinogen-III from 5-aminolevulinate: step 2/4. It functions in the pathway porphyrin-containing compound metabolism; chlorophyll biosynthesis. Tetrapolymerization of the monopyrrole PBG into the hydroxymethylbilane pre-uroporphyrinogen in several discrete steps. The polypeptide is Porphobilinogen deaminase (Roseiflexus sp. (strain RS-1)).